Here is a 622-residue protein sequence, read N- to C-terminus: Probable potassium transport system protein Kup (622 aa).

Helical transmembrane passes span 7–27, 44–64, 95–115, 133–153, 165–185, 199–219, 243–263, 290–310, 338–358, 370–390, 395–415, and 422–442; these read LAIGAIGIVFGDIGTSPLYAF, VLGVVSLIFWSMTLIVAIQYV, GWLVVLLGVFATSLFYGDSMI, PELQGFVIPIALVLLVGLFVL, FAPVMIVYFTVIATLGLISIV, AVLFFINDGFLAFLALGSVVL, WFGFVMPCLLLNYFGQGAMIV, LVILATFATFIASQAVISGAF, IYIPVINWALMVAVILLVLTF, IAVTGAVTIDTLLMAVLLVGV, WYYAAPVVIVFLIIDGAYFAA, and DGGWFPLVVGLIVFTLLTTWA.

Belongs to the HAK/KUP transporter (TC 2.A.72) family.

It is found in the cell inner membrane. The catalysed reaction is K(+)(in) + H(+)(in) = K(+)(out) + H(+)(out). In terms of biological role, transport of potassium into the cell. Likely operates as a K(+):H(+) symporter. The chain is Probable potassium transport system protein Kup from Erythrobacter litoralis (strain HTCC2594).